A 146-amino-acid polypeptide reads, in one-letter code: Hemoglobin subunit beta-A/B (146 aa).

Position 1 is an N-acetylserine; in variant beta-B (glycine 1). The region spanning 2 to 146 (FLTAEEKGLV…VANALAHKYH (145 aa)) is the Globin domain. Position 44 is a phosphoserine (serine 44). An N6-acetyllysine modification is found at lysine 59. Residue histidine 63 participates in heme b binding. Lysine 82 is modified (N6-acetyllysine). Histidine 92 is a heme b binding site. Cysteine 93 is subject to S-nitrosocysteine. Residue lysine 144 is modified to N6-acetyllysine.

The protein belongs to the globin family. Heterotetramer of two alpha chains and two beta chains. As to expression, red blood cells.

Involved in oxygen transport from the lung to the various peripheral tissues. The chain is Hemoglobin subunit beta-A/B (HBB) from Felis catus (Cat).